The sequence spans 262 residues: Flap endonuclease Xni (262 aa).

Asp-109 contacts Mg(2+). The 5'-3' exonuclease domain occupies 165–255 (LKPEQLADYW…FNLQDIRYEK (91 aa)). Residues Leu-176, Ala-177, Ile-187, and Val-190 each contribute to the K(+) site. Residues 189–194 (GVGPKA) are interaction with DNA.

It belongs to the Xni family. Mg(2+) serves as cofactor. It depends on K(+) as a cofactor.

Functionally, has flap endonuclease activity. During DNA replication, flap endonucleases cleave the 5'-overhanging flap structure that is generated by displacement synthesis when DNA polymerase encounters the 5'-end of a downstream Okazaki fragment. The polypeptide is Flap endonuclease Xni (Aliivibrio fischeri (strain MJ11) (Vibrio fischeri)).